Consider the following 828-residue polypeptide: Periplasmic nitrate reductase (828 aa).

The segment at residues 1–33 (MKLSRRDFMKANAAVAAAAAAGLTIPTVVQAAA) is a signal peptide (tat-type signal). The 4Fe-4S Mo/W bis-MGD-type domain occupies 39–95 (IKWDKAPCRFCGTGCGVLVGTQNGRIVASQGDPEAAVNRGLSCIKGYFLPKIMYGKD). C46, C49, C53, and C81 together coordinate [4Fe-4S] cluster. Residues K83, Q150, N175, C179, 212 to 219 (WGSNMAEM), 243 to 247 (STFEH), 262 to 264 (QTD), M372, Q376, N482, 508 to 509 (SD), K531, D558, and 718 to 727 (TGRVLEHWHT) each bind Mo-bis(molybdopterin guanine dinucleotide). Residue F794 participates in substrate binding. Mo-bis(molybdopterin guanine dinucleotide) contacts are provided by N802 and K819.

This sequence belongs to the prokaryotic molybdopterin-containing oxidoreductase family. NasA/NapA/NarB subfamily. In terms of assembly, component of the periplasmic nitrate reductase NapAB complex composed of NapA and NapB. [4Fe-4S] cluster is required as a cofactor. It depends on Mo-bis(molybdopterin guanine dinucleotide) as a cofactor. Post-translationally, predicted to be exported by the Tat system. The position of the signal peptide cleavage has not been experimentally proven.

The protein localises to the periplasm. The enzyme catalyses 2 Fe(II)-[cytochrome] + nitrate + 2 H(+) = 2 Fe(III)-[cytochrome] + nitrite + H2O. Its function is as follows. Catalytic subunit of the periplasmic nitrate reductase complex NapAB. Receives electrons from NapB and catalyzes the reduction of nitrate to nitrite. The sequence is that of Periplasmic nitrate reductase from Serratia proteamaculans (strain 568).